Consider the following 809-residue polypeptide: Phenylalanine--tRNA ligase beta subunit (809 aa).

Residues K39 to S152 enclose the tRNA-binding domain. The 89-residue stretch at K404–C492 folds into the B5 domain. Mg(2+) contacts are provided by D470, D476, E479, and E480. Residues N717 to R808 form the FDX-ACB domain.

This sequence belongs to the phenylalanyl-tRNA synthetase beta subunit family. Type 1 subfamily. In terms of assembly, tetramer of two alpha and two beta subunits. Requires Mg(2+) as cofactor.

The protein localises to the cytoplasm. It catalyses the reaction tRNA(Phe) + L-phenylalanine + ATP = L-phenylalanyl-tRNA(Phe) + AMP + diphosphate + H(+). This chain is Phenylalanine--tRNA ligase beta subunit, found in Dehalococcoides mccartyi (strain ATCC BAA-2266 / KCTC 15142 / 195) (Dehalococcoides ethenogenes (strain 195)).